Reading from the N-terminus, the 220-residue chain is Protein US2 homolog (220 aa).

This sequence belongs to the herpesviridae US2 family.

The chain is Protein US2 homolog from Bovine herpesvirus 1.2 (strain ST) (BoHV-1).